Consider the following 353-residue polypeptide: Membrane lipoprotein TmpC (353 aa).

The signal sequence occupies residues 1-20 (MREKWVRAFAGVFCAMLLIG). Cys21 carries the N-palmitoyl cysteine lipid modification. A lipid anchor (S-diacylglycerol cysteine) is attached at Cys21. Asp47 lines the guanosine pocket. Residue Asp47 participates in inosine binding. Residues 47-48 (DS) and Phe56 each bind adenosine. Guanosine is bound by residues Asn57, Asp128, Phe206, Gly232, Asp258, and Lys280. 2 residues coordinate inosine: Asn57 and Asp128. Residues Asp128, Phe206, Gly232, Asp258, and Lys280 each contribute to the adenosine site. Inosine-binding residues include Gly232, Asp258, and Lys280.

This sequence belongs to the BMP lipoprotein family. Monomer.

It localises to the cell membrane. In terms of biological role, binds purine nucleosides and may play a role in purine nucleoside uptake. May be part of an ABC-type nucleoside uptake system. Has highest affinity for guanosine, followed by inosine and adenosine. Has very low affinity for cytidine and does not bind thymidine. This is Membrane lipoprotein TmpC (tmpC) from Treponema pallidum (strain Nichols).